The following is a 528-amino-acid chain: Peptide chain release factor 3 (528 aa).

In terms of domain architecture, tr-type G spans 11–279 (SDRRTFAIIS…GFVEWAPAPI (269 aa)). GTP contacts are provided by residues 20 to 27 (SHPDAGKT), 88 to 92 (DTPGH), and 142 to 145 (NKMD).

This sequence belongs to the TRAFAC class translation factor GTPase superfamily. Classic translation factor GTPase family. PrfC subfamily.

It is found in the cytoplasm. Its function is as follows. Increases the formation of ribosomal termination complexes and stimulates activities of RF-1 and RF-2. It binds guanine nucleotides and has strong preference for UGA stop codons. It may interact directly with the ribosome. The stimulation of RF-1 and RF-2 is significantly reduced by GTP and GDP, but not by GMP. The protein is Peptide chain release factor 3 of Marinomonas sp. (strain MWYL1).